The chain runs to 588 residues: Phosphomethylpyrimidine synthase (588 aa).

Substrate-binding positions include N212, M241, Y270, H306, 326–328 (SRG), 367–370 (DGLR), and E406. H410 provides a ligand contact to Zn(2+). Y433 is a binding site for substrate. H474 lines the Zn(2+) pocket. Residues C554, C557, and C562 each coordinate [4Fe-4S] cluster.

This sequence belongs to the ThiC family. As to quaternary structure, homodimer. [4Fe-4S] cluster is required as a cofactor.

It carries out the reaction 5-amino-1-(5-phospho-beta-D-ribosyl)imidazole + S-adenosyl-L-methionine = 4-amino-2-methyl-5-(phosphooxymethyl)pyrimidine + CO + 5'-deoxyadenosine + formate + L-methionine + 3 H(+). Its pathway is cofactor biosynthesis; thiamine diphosphate biosynthesis. Functionally, catalyzes the synthesis of the hydroxymethylpyrimidine phosphate (HMP-P) moiety of thiamine from aminoimidazole ribotide (AIR) in a radical S-adenosyl-L-methionine (SAM)-dependent reaction. In Bartonella quintana (strain Toulouse) (Rochalimaea quintana), this protein is Phosphomethylpyrimidine synthase.